The primary structure comprises 340 residues: UDP-glucose 4-epimerase (340 aa).

Residues 16-17 (YI), 37-42 (IDNNKN), 60-61 (DL), 82-86 (FAAKT), S127, Y154, K158, and F182 contribute to the NAD(+) site. Positions 127 and 154 each coordinate substrate. Y154 serves as the catalytic Proton acceptor. Substrate-binding positions include N183, 199–200 (TL), 216–218 (FLY), R231, and 295–298 (RSWD).

The protein belongs to the NAD(P)-dependent epimerase/dehydratase family. In terms of assembly, homodimer. It depends on NAD(+) as a cofactor.

It carries out the reaction UDP-alpha-D-glucose = UDP-alpha-D-galactose. Its pathway is carbohydrate metabolism; galactose metabolism. Functionally, involved in the metabolism of galactose. Catalyzes the conversion of UDP-galactose (UDP-Gal) to UDP-glucose (UDP-Glc) through a mechanism involving the transient reduction of NAD. The protein is UDP-glucose 4-epimerase (galE) of Mycoplasma genitalium (strain ATCC 33530 / DSM 19775 / NCTC 10195 / G37) (Mycoplasmoides genitalium).